The following is a 313-amino-acid chain: ADP,ATP carrier protein (313 aa).

Solcar repeat units follow at residues 11–104 (PPFV…FKKM), 116–208 (KWMA…IKPV), and 216–302 (NNFL…LQVL). The next 5 helical transmembrane spans lie at 13–40 (FVAD…IKLL), 81–105 (TANV…KKMF), 114–134 (YWKW…TSLL), 184–205 (FGPS…YDSI), and 219–239 (LASF…SYPL). Residues Arg-86 and Arg-98 each contribute to the ADP site. An ADP-binding site is contributed by Arg-243. Residues 243-248 (RRRMMM) form an important for transport activity region. A Nucleotide carrier signature motif motif is present at residues 243-248 (RRRMMM). The helical transmembrane segment at 279 to 299 (AGANILRGVAGAGVLSIYDQL) threads the bilayer.

It belongs to the mitochondrial carrier (TC 2.A.29) family. In terms of assembly, monomer.

The protein localises to the mitochondrion inner membrane. It carries out the reaction ADP(in) + ATP(out) = ADP(out) + ATP(in). The matrix-open state (m-state) is inhibited by the membrane-permeable bongkrekic acid (BKA). The cytoplasmic-open state (c-state) is inhibited by the membrane-impermeable toxic inhibitor carboxyatractyloside (CATR). Its function is as follows. ADP:ATP antiporter that mediates import of ADP into the mitochondrial matrix for ATP synthesis, and export of ATP out to fuel the cell. Cycles between the cytoplasmic-open state (c-state) and the matrix-open state (m-state): operates by the alternating access mechanism with a single substrate-binding site intermittently exposed to either the cytosolic (c-state) or matrix (m-state) side of the inner mitochondrial membrane. The sequence is that of ADP,ATP carrier protein (aac) from Neurospora crassa (strain ATCC 24698 / 74-OR23-1A / CBS 708.71 / DSM 1257 / FGSC 987).